Consider the following 649-residue polypeptide: Macrolide export ATP-binding/permease protein MacB 1 (649 aa).

Positions Leu-5–Pro-243 constitute an ABC transporter domain. Gly-41–Ser-48 serves as a coordination point for ATP. Transmembrane regions (helical) follow at residues Ala-274–Gly-294, Val-420–Glu-440, Leu-524–Ile-544, Val-578–Ile-598, and Ile-608–Val-628.

Belongs to the ABC transporter superfamily. Macrolide exporter (TC 3.A.1.122) family. In terms of assembly, homodimer. Part of the tripartite efflux system MacAB-TolC, which is composed of an inner membrane transporter, MacB, a periplasmic membrane fusion protein, MacA, and an outer membrane component, TolC. The complex forms a large protein conduit and can translocate molecules across both the inner and outer membranes. Interacts with MacA.

It is found in the cell inner membrane. Its function is as follows. Part of the tripartite efflux system MacAB-TolC. MacB is a non-canonical ABC transporter that contains transmembrane domains (TMD), which form a pore in the inner membrane, and an ATP-binding domain (NBD), which is responsible for energy generation. Confers resistance against macrolides. The polypeptide is Macrolide export ATP-binding/permease protein MacB 1 (Yersinia pestis bv. Antiqua (strain Antiqua)).